The sequence spans 98 residues: MTMVYANIFLAFITSLMGLLMYRSHLMSSLLCLEGMMLSLFVMMTITILNSHFTLASMTPIILLVFAACEAALGLSLLVMVSNTYGTDYVQNLNLLQC.

Helical transmembrane passes span 1–21, 29–49, and 61–81; these read MTMV…GLLM, SLLC…ITIL, and IILL…LVMV.

Belongs to the complex I subunit 4L family. In terms of assembly, core subunit of respiratory chain NADH dehydrogenase (Complex I) which is composed of 45 different subunits.

The protein resides in the mitochondrion inner membrane. It catalyses the reaction a ubiquinone + NADH + 5 H(+)(in) = a ubiquinol + NAD(+) + 4 H(+)(out). Core subunit of the mitochondrial membrane respiratory chain NADH dehydrogenase (Complex I) which catalyzes electron transfer from NADH through the respiratory chain, using ubiquinone as an electron acceptor. Part of the enzyme membrane arm which is embedded in the lipid bilayer and involved in proton translocation. The chain is NADH-ubiquinone oxidoreductase chain 4L (MT-ND4L) from Ommatophoca rossii (Ross seal).